Here is a 233-residue protein sequence, read N- to C-terminus: Riboflavin kinase (233 aa).

The segment at 1–104 is H-T-H motif-like; the sequence is MVRDIKTFKF…YKKIFDDEGT (104 aa). Positions 105 to 233 are riboflavin kinase; the sequence is IKIKGEVFSG…GDFVEVEVIL (129 aa). 114-119 contributes to the CDP binding site; sequence GVGEGR. Mg(2+)-binding residues include Thr-143 and Asn-145. Residues Thr-200 and Glu-208 each coordinate FMN. 213 to 216 contributes to the CDP binding site; that stretch reads VKLR.

Belongs to the archaeal riboflavin kinase family. It depends on Mg(2+) as a cofactor.

It carries out the reaction riboflavin + CTP = CDP + FMN + H(+). It functions in the pathway cofactor biosynthesis; FMN biosynthesis; FMN from riboflavin (CTP route): step 1/1. In terms of biological role, catalyzes the CTP-dependent phosphorylation of riboflavin (vitamin B2) to form flavin mononucleotide (FMN). The polypeptide is Riboflavin kinase (ribK) (Archaeoglobus fulgidus (strain ATCC 49558 / DSM 4304 / JCM 9628 / NBRC 100126 / VC-16)).